Consider the following 234-residue polypeptide: 2-C-methyl-D-erythritol 4-phosphate cytidylyltransferase (234 aa).

It belongs to the IspD/TarI cytidylyltransferase family. IspD subfamily.

The catalysed reaction is 2-C-methyl-D-erythritol 4-phosphate + CTP + H(+) = 4-CDP-2-C-methyl-D-erythritol + diphosphate. The protein operates within isoprenoid biosynthesis; isopentenyl diphosphate biosynthesis via DXP pathway; isopentenyl diphosphate from 1-deoxy-D-xylulose 5-phosphate: step 2/6. Its function is as follows. Catalyzes the formation of 4-diphosphocytidyl-2-C-methyl-D-erythritol from CTP and 2-C-methyl-D-erythritol 4-phosphate (MEP). The chain is 2-C-methyl-D-erythritol 4-phosphate cytidylyltransferase from Pseudomonas aeruginosa (strain ATCC 15692 / DSM 22644 / CIP 104116 / JCM 14847 / LMG 12228 / 1C / PRS 101 / PAO1).